Here is a 610-residue protein sequence, read N- to C-terminus: All-trans-retinol 13,14-reductase (610 aa).

Residues Met-1–Cys-18 form the signal peptide.

The protein belongs to the carotenoid/retinoid oxidoreductase family. CrtISO subfamily. The cofactor is NAD(+). NADP(+) is required as a cofactor. Requires FAD as cofactor. As to expression, expressed in liver; expression positively correlates with obesity and liver steatosis. Expressed in adipose tissue; expression tends to be decreased in obese versus lean individuals.

The protein resides in the endoplasmic reticulum membrane. It carries out the reaction all-trans-13,14-dihydroretinol + A = all-trans-retinol + AH2. Catalyzes the saturation of all-trans-retinol to all-trans-13,14-dihydroretinol. Does not exhibit any activity toward all-trans-retinoic acid, nor 9-cis, 11-cis or 13-cis-retinol isomers. May play a role in the metabolism of vitamin A. Independently of retinol conversion, may regulate liver metabolism upstream of MLXIPL/ChREBP. May play a role in adipocyte differentiation. In Homo sapiens (Human), this protein is All-trans-retinol 13,14-reductase (RETSAT).